The sequence spans 165 residues: Nucleotide-binding protein Ctha_0558 (165 aa).

Belongs to the YajQ family.

Its function is as follows. Nucleotide-binding protein. The protein is Nucleotide-binding protein Ctha_0558 of Chloroherpeton thalassium (strain ATCC 35110 / GB-78).